The chain runs to 542 residues: MEARRSGNFKASIWDDDFLQSLTSPYTAKEYLKQADKLKWQVKVIIKETKQRLDQLDLIDNIQRLGISHHFRDEIQRVLQNIYEKMRVECPDRMLMEKDLYSTSLQFRLLRQHGYHVSQDVFCSFMDGAGNFQAVDDLKGILALYEASFLSREGENILGSARDFSTRHLKQKLEEITDPILAEKIRRALELPLHWRLQKLEAIWFINIYESRFDANLILLQLAKLEFNMVQAQYQEDLKWLSRWYKETGLPEKMNFARDRLAECFLWALGFIPEAHLGQARKILTKIAVLIVIMDDFYDIYGTLDEIKVFTEELQRWDINALDNLPEYMRICFLAIFNTANEIAYDILRDQGINIISNLRRLWAELGRVYYTEAKWYHSGYFPSTEEYLNVAWISITGPVLLFHAYFSIMNPIDMKELQYLEQYPGIIRWPSTVLRLADDLGTASDEIKRGDVPKSIQCYMHETGCSEEEAREYVKQLIDTTLKKMNKEILMEKPTNDFGATAMNLARISLFFYQYGDGFGVPHNQTKENLVSLIVKPICLT.

5 residues coordinate Mg(2+): Asp-295, Asp-299, Asp-439, Thr-443, and Glu-447. A DDXXD motif motif is present at residues 295-299; sequence DDFYD.

Belongs to the terpene synthase family. Mg(2+) is required as a cofactor.

The catalysed reaction is (2E,6E)-farnesyl diphosphate = (1S,5S,6R)-alpha-bergamotene + diphosphate. The protein operates within secondary metabolite biosynthesis; terpenoid biosynthesis. Sesquiterpene synthase converting farnesyl diphosphate to trans-alpha-bergamotene as the major product. This is Trans-alpha-bergamotene synthase from Phyla dulcis (Aztec sweet herb).